A 413-amino-acid chain; its full sequence is Histidine--tRNA ligase (413 aa).

It belongs to the class-II aminoacyl-tRNA synthetase family. In terms of assembly, homodimer.

Its subcellular location is the cytoplasm. The enzyme catalyses tRNA(His) + L-histidine + ATP = L-histidyl-tRNA(His) + AMP + diphosphate + H(+). The polypeptide is Histidine--tRNA ligase (Neorickettsia sennetsu (strain ATCC VR-367 / Miyayama) (Ehrlichia sennetsu)).